A 117-amino-acid polypeptide reads, in one-letter code: UPF0125 protein VV0820 (117 aa).

Residues 90–117 form a disordered region; that stretch reads RKRAEQAKESGAADPVTGGKPSPLRKAD.

It belongs to the UPF0125 (RnfH) family.

The protein is UPF0125 protein VV0820 of Vibrio vulnificus (strain YJ016).